The sequence spans 624 residues: LEAF RUST 10 DISEASE-RESISTANCE LOCUS RECEPTOR-LIKE PROTEIN KINASE-like 2.2 (624 aa).

A signal peptide spans 1–30 (MDYLSSMGSQTARFCLILLFLFYYLPCALS). Over 31-263 (QDDLWGCGTP…IPNTRSILIT (233 aa)) the chain is Extracellular. N-linked (GlcNAc...) asparagine glycosylation is found at N45, N75, N85, N95, N150, and N164. A helical transmembrane segment spans residues 264 to 284 (IGQVVGFHVFIIVVMIIAFLF). Topologically, residues 285–624 (WRRKKVNDLR…EEDSSIYSEV (340 aa)) are cytoplasmic. The Protein kinase domain occupies 317–599 (KSFTEVVGRG…SLDPPPKPLL (283 aa)). Residues 323–331 (VGRGGFGTV) and K345 each bind ATP. D434 functions as the Proton acceptor in the catalytic mechanism. A disordered region spans residues 587-624 (NLDSLDPPPKPLLHMPMQNNNAESSQPSEEDSSIYSEV). The span at 603–624 (MQNNNAESSQPSEEDSSIYSEV) shows a compositional bias: polar residues.

The protein belongs to the protein kinase superfamily. Ser/Thr protein kinase family.

The protein resides in the membrane. It carries out the reaction L-seryl-[protein] + ATP = O-phospho-L-seryl-[protein] + ADP + H(+). The catalysed reaction is L-threonyl-[protein] + ATP = O-phospho-L-threonyl-[protein] + ADP + H(+). The chain is LEAF RUST 10 DISEASE-RESISTANCE LOCUS RECEPTOR-LIKE PROTEIN KINASE-like 2.2 from Arabidopsis thaliana (Mouse-ear cress).